We begin with the raw amino-acid sequence, 66 residues long: Large ribosomal subunit protein bL35 (66 aa).

Basic residues predominate over residues 1–16; the sequence is MPKQKTHRASAKRFKR. A disordered region spans residues 1 to 21; that stretch reads MPKQKTHRASAKRFKRTGSGG.

Belongs to the bacterial ribosomal protein bL35 family.

The sequence is that of Large ribosomal subunit protein bL35 from Streptococcus gordonii (strain Challis / ATCC 35105 / BCRC 15272 / CH1 / DL1 / V288).